The primary structure comprises 450 residues: Phosphoglucosamine mutase (450 aa).

S101 functions as the Phosphoserine intermediate in the catalytic mechanism. 4 residues coordinate Mg(2+): S101, D242, D244, and D246. S101 is modified (phosphoserine).

The protein belongs to the phosphohexose mutase family. Mg(2+) is required as a cofactor. In terms of processing, activated by phosphorylation.

It catalyses the reaction alpha-D-glucosamine 1-phosphate = D-glucosamine 6-phosphate. Catalyzes the conversion of glucosamine-6-phosphate to glucosamine-1-phosphate. The sequence is that of Phosphoglucosamine mutase from Rhodopseudomonas palustris (strain BisA53).